A 60-amino-acid polypeptide reads, in one-letter code: Large ribosomal subunit protein uL30 (60 aa).

The protein belongs to the universal ribosomal protein uL30 family. Part of the 50S ribosomal subunit.

In Pediococcus pentosaceus (strain ATCC 25745 / CCUG 21536 / LMG 10740 / 183-1w), this protein is Large ribosomal subunit protein uL30.